The chain runs to 131 residues: Large ribosomal subunit protein bL17 (131 aa).

Belongs to the bacterial ribosomal protein bL17 family. In terms of assembly, part of the 50S ribosomal subunit. Contacts protein L32.

This Methylobacillus flagellatus (strain ATCC 51484 / DSM 6875 / VKM B-1610 / KT) protein is Large ribosomal subunit protein bL17.